We begin with the raw amino-acid sequence, 23 residues long: Dahlein-4.2 (23 aa).

Expressed by the skin dorsal glands.

The protein localises to the secreted. Has no antimicrobial activity. The protein is Dahlein-4.2 of Ranoidea dahlii (Dahl's aquatic frog).